We begin with the raw amino-acid sequence, 701 residues long: Transcription factor PDR8 (701 aa).

Residues 1 to 22 form a disordered region; sequence MDGSHFPMKSTTGEPVSSGKKG. The segment at residues 31 to 59 is a DNA-binding region (zn(2)-C6 fungal-type); it reads CAFCRKRKLKCSQARPMCQQCVIRKLPQC.

It localises to the cytoplasm. The protein localises to the nucleus. Functionally, up-regulates the transcription of the genes for ATP-binding cassette (ABC) transporters YOR1 and PDR15, for major facilitator superfamily transporter AZR1, for pleiotropic drug resistance SNG1, for alpha-glucosidase YJL216C and for YLL056C. The sequence is that of Transcription factor PDR8 (PDR8) from Saccharomyces cerevisiae (strain ATCC 204508 / S288c) (Baker's yeast).